The chain runs to 615 residues: MDETQQLLYKFKNLTISENEKLKLKEKADHFYFNTEKEILTDNEYDILAEQLQSTNVGCSPLISKTDLPLWMGSLDKVYNDKELNLWIKKVASDKYIIQCKLDGVSCLIINKDNKLKAYTRGNGKVGTDISHLIKYFIKDKCLPNNIALRCEIIIKKETFNQKYKHAFSNPRSFVSGVVNRKQENIVISELNDLCLIAYELINFPVNEYQKNILTQIEIIEQLNFIQFVNFKTISNEFLTQKALSNLFKEMKNNSLFEMDGLVILANTPYIRVTEGNPKHSIAFKVRGDNVKEAKVTFIEWNVGKTGVFTPKVHIVPTEINGTTVSCFTGFNANYLIEKGIGEGAIILVTRAGDAIPQIIGVKQTGVLTFPKDYEWKGDCRIVEKIESKERIIKQILHFVESVDIPYIKEATINKLYNNGCTSIELFLKLTQKDLLLFGPKLSSTIYNSIQKSFEAPIEKFLSGYNAFGDYIGEKKILLLLQKYPNLFELENLDAIDLVSIEGIGSKTATQIKQHFINAKLIYNNIIQNKLFKGVLHTPSKQNTVELFKVCVSGTRDPLFIQELKNRGFVLSDNITKKVKVLIVKNSNEETTKVKKANSVGITILTLEDFKQKYF.

Lysine 101 acts as the N6-AMP-lysine intermediate in catalysis.

Belongs to the NAD-dependent DNA ligase family.

It carries out the reaction NAD(+) + (deoxyribonucleotide)n-3'-hydroxyl + 5'-phospho-(deoxyribonucleotide)m = (deoxyribonucleotide)n+m + AMP + beta-nicotinamide D-nucleotide.. Its function is as follows. Catalyzes the formation of phosphodiester linkages between 5'-phosphoryl and 3'-hydroxyl groups in double-stranded DNA using NAD as a coenzyme and as the energy source for the reaction. The chain is Putative DNA ligase 205R from Invertebrate iridescent virus 6 (IIV-6).